The chain runs to 571 residues: Ferroportin (571 aa).

Topologically, residues 1-23 are cytoplasmic; the sequence is MTRAGDHNRQRGCCGSLADYLTS. The helical transmembrane segment at 24–53 threads the bilayer; sequence AKFLLYLGHSLSTWGDRMWHFAVSVFLVEL. Fe cation is bound by residues aspartate 39 and histidine 43. The Extracellular segment spans residues 54–57; it reads YGNS. Residues 58 to 84 form a helical membrane-spanning segment; that stretch reads LLLTAVYGLVVAGSVLVLGAIIGDWVD. Topologically, residues 85 to 87 are cytoplasmic; that stretch reads KNA. A helical membrane pass occupies residues 88 to 118; sequence RLKVAQTSLVVQNVSVILCGIILMMVFLHKH. The Extracellular portion of the chain corresponds to 119 to 126; that stretch reads ELLTMYHG. The helical transmembrane segment at 127-162 threads the bilayer; sequence WVLTSCYILIITIANIANLASTATAITIQRDWIVVV. Over 163–164 the chain is Cytoplasmic; the sequence is AG. Residues 165 to 195 traverse the membrane as a helical segment; the sequence is EDRSKLANMNATIRRIDQLTNILAPMAVGQI. Over 196 to 202 the chain is Extracellular; that stretch reads MTFGSPV. A helical membrane pass occupies residues 203-229; that stretch reads IGCGFISGWNLVSMCVEYVLLWKVYQK. Topologically, residues 230–306 are cytoplasmic; that stretch reads TPALAVKAGL…DGWVSYYNQP (77 aa). The chain crosses the membrane as a helical span at residues 307–333; it reads VFLAGMGLAFLYMTVLGFDCITTGYAY. Position 326 (cysteine 326) interacts with Fe cation. At 334-338 the chain is on the extracellular side; that stretch reads TQGLS. A helical membrane pass occupies residues 339-366; sequence GSILSILMGASAITGIMGTVAFTWLRRK. Topologically, residues 367–368 are cytoplasmic; it reads CG. Residues 369–391 form a helical membrane-spanning segment; the sequence is LVRTGLISGLAQLSCLILCVISV. Over 392–453 the chain is Extracellular; that stretch reads FMPGSPLDLS…ETSPESVPII (62 aa). Asparagine 434 is a glycosylation site (N-linked (GlcNAc...) asparagine). The helical transmembrane segment at 454 to 483 threads the bilayer; sequence SVSLLFAGVIAARIGLWSFDLTVTQLLQEN. Residues 484–488 are Cytoplasmic-facing; sequence VIESE. The chain crosses the membrane as a helical span at residues 489–513; it reads RGIINGVQNSMNYLLDLLHFIMVIL. Histidine 507 serves as a coordination point for Fe cation. Residues 514 to 516 are Extracellular-facing; the sequence is APN. Residues 517–542 form a helical membrane-spanning segment; sequence PEAFGLLVLISVSFVAMGHIMYFRFA. The Cytoplasmic segment spans residues 543-571; sequence QNTLGNKLFACGPDAKEVRKENQANTSVV.

Belongs to the ferroportin (FP) (TC 2.A.100) family. SLC40A subfamily. As to quaternary structure, identified in a complex with STOM. Interacts with HAMP; affinity of the peptide hormone HAMP for SLC40A1 increases by 80-fold in the presence of iron and the interaction promotes SLC40A1 ubiquitination and degradation. Part of a complex composed of SLC40A1/ferroportin, TF/transferrin and HEPH/hephaestin that transfers iron from cells to transferrin. Polyubiquitinated by RNF217; leading to proteasomal degradation. Under conditions of high systemic iron levels, both the hormone peptide hepcidin/HAMP and holo(iron bound)-transferrin/TF induce the ubiquitination, internalization and proteasomal degradation of SLC40A1 to control iron release from cells. Detected in erythrocytes (at protein level). Expressed in placenta, intestine, muscle and spleen. Highly expressed in mature red blood.

It localises to the cell membrane. It is found in the basolateral cell membrane. It carries out the reaction Fe(2+)(in) = Fe(2+)(out). In terms of biological role, transports Fe(2+) from the inside of a cell to the outside of the cell, playing a key role for maintaining systemic iron homeostasis. Transports iron from intestinal, splenic, hepatic cells, macrophages and erythrocytes into the blood to provide iron to other tissues. Controls therefore dietary iron uptake, iron recycling by macrophages and erythrocytes, and release of iron stores in hepatocytes. When iron is in excess in serum, circulating HAMP/hepcidin levels increase resulting in a degradation of SLC40A1, thus limiting the iron efflux to plasma. The sequence is that of Ferroportin from Homo sapiens (Human).